Reading from the N-terminus, the 376-residue chain is N-acetyldiaminopimelate deacetylase (376 aa).

D69 is a catalytic residue. The active-site Proton acceptor is E128.

It belongs to the peptidase M20A family. N-acetyldiaminopimelate deacetylase subfamily.

The catalysed reaction is N-acetyl-(2S,6S)-2,6-diaminopimelate + H2O = (2S,6S)-2,6-diaminopimelate + acetate. It functions in the pathway amino-acid biosynthesis; L-lysine biosynthesis via DAP pathway; LL-2,6-diaminopimelate from (S)-tetrahydrodipicolinate (acetylase route): step 3/3. Functionally, catalyzes the conversion of N-acetyl-diaminopimelate to diaminopimelate and acetate. In Streptococcus pneumoniae (strain CGSP14), this protein is N-acetyldiaminopimelate deacetylase.